Consider the following 457-residue polypeptide: Trigger factor (457 aa).

Residues Gly162–Pro243 enclose the PPIase FKBP-type domain. The tract at residues Ala434–Lys457 is disordered. Residues Ser440–Lys457 are compositionally biased toward acidic residues.

Belongs to the FKBP-type PPIase family. Tig subfamily.

It localises to the cytoplasm. The catalysed reaction is [protein]-peptidylproline (omega=180) = [protein]-peptidylproline (omega=0). Involved in protein export. Acts as a chaperone by maintaining the newly synthesized protein in an open conformation. Functions as a peptidyl-prolyl cis-trans isomerase. The sequence is that of Trigger factor from Rhodococcus erythropolis (strain PR4 / NBRC 100887).